We begin with the raw amino-acid sequence, 408 residues long: uncharacterized protein (408 aa).

The segment at 49–77 (PRSSPEVQRKATAGENSEVGSPESSLSTS) is disordered. Residues 62-77 (GENSEVGSPESSLSTS) are compositionally biased toward polar residues. The 47-residue stretch at 124-170 (SFEFMQLPDTDICQIMSFLDAQSLLNLSQTCSHLRQLCLAHEDNAGK) folds into the F-box domain.

This is an uncharacterized protein from Caenorhabditis elegans.